The primary structure comprises 550 residues: Transcription factor 7-like 1-C (550 aa).

A compositionally biased stretch (gly residues) spans 1–11 (MPQLNSGGGDE). Residues 1–60 (MPQLNSGGGDELGANDELIRFKDEGEQEEKSPGEGSAEDLADVKSSLVNESENHSSDSDS) are interaction with CTNNB1-A. 3 disordered regions span residues 1–76 (MPQL…EKPR), 182–206 (GTPP…HPSE), and 390–473 (WSAR…SLTT). Composition is skewed to basic and acidic residues over residues 17-32 (ELIR…EKSP) and 51-76 (SENH…EKPR). The segment at 108-311 (LGGITCPMVP…SPNLSRKSNV (204 aa)) is interaction with AES and TLE4-A. Residues 323 to 391 (IKKPLNAFML…LHSQLYPSWS (69 aa)) constitute a DNA-binding region (HMG box). Residues 406–415 (KQSPEMENYT) show a composition bias toward basic and acidic residues. The interval 407 to 550 (QSPEMENYTK…PLSLVTRSSD (144 aa)) is interaction with CTBP-B. A compositionally biased stretch (low complexity) spans 444–463 (SPATPSAALASPAAPAATHS). The segment covering 464–473 (EQAQPLSLTT) has biased composition (polar residues).

Belongs to the TCF/LEF family. As to quaternary structure, interacts with csnk1e, ctnnb1-A, ctbp-B, dact1-A and gsk3b. May interact with ase and tle4-A. Phosphorylated. Phosphorylation by csnk1e promotes binding to ctnnb1-A while phosphorylation by gsk3b may reverse this effect.

The protein resides in the nucleus. In terms of biological role, participates in the Wnt signaling pathway. Binds to DNA and acts as a repressor in the absence of ctnnb1-A and possibly ctnnb1-B, and as an activator in the presence of these proteins. Required early in development for the establishment of the dorsal body axis in response to maternal Wnt signaling. This chain is Transcription factor 7-like 1-C (tcf7l1-c), found in Xenopus laevis (African clawed frog).